Reading from the N-terminus, the 279-residue chain is Large ribosomal subunit protein uL2 (279 aa).

2 disordered regions span residues 32 to 53 and 225 to 279; these read SLLR…TTRH and AMNP…KKRK. Positions 253–268 are enriched in basic and acidic residues; that stretch reads KEGRTRHINKPSDKLI. Residues 269–279 are compositionally biased toward basic residues; that stretch reads VRRRNAGKKRK.

This sequence belongs to the universal ribosomal protein uL2 family. As to quaternary structure, part of the 50S ribosomal subunit. Forms a bridge to the 30S subunit in the 70S ribosome.

Functionally, one of the primary rRNA binding proteins. Required for association of the 30S and 50S subunits to form the 70S ribosome, for tRNA binding and peptide bond formation. It has been suggested to have peptidyltransferase activity; this is somewhat controversial. Makes several contacts with the 16S rRNA in the 70S ribosome. This Clavibacter michiganensis subsp. michiganensis (strain NCPPB 382) protein is Large ribosomal subunit protein uL2.